The primary structure comprises 288 residues: 2-hydroxy-6-oxononadienedioate/2-hydroxy-6-oxononatrienedioate hydrolase (288 aa).

An AB hydrolase-1 domain is found at 39-274 (LVLLHGSGPG…RCGHWAQWEH (236 aa)). The active-site Proton acceptor is His268.

This sequence belongs to the AB hydrolase superfamily. MhpC family. Homodimer.

The catalysed reaction is (2Z,4E)-2-hydroxy-6-oxonona-2,4-dienedioate + H2O = (2Z)-2-hydroxypenta-2,4-dienoate + succinate + H(+). The enzyme catalyses (2Z,4E,7E)-2-hydroxy-6-oxonona-2,4,7-trienedioate + H2O = (2Z)-2-hydroxypenta-2,4-dienoate + fumarate + H(+). The protein operates within aromatic compound metabolism; 3-phenylpropanoate degradation. Functionally, catalyzes the cleavage of the C5-C6 bond of 2-hydroxy-6-oxononadienedioate and 2-hydroxy-6-oxononatrienedioate, a dienol ring fission product of the bacterial meta-cleavage pathway for degradation of phenylpropionic acid. The polypeptide is 2-hydroxy-6-oxononadienedioate/2-hydroxy-6-oxononatrienedioate hydrolase (Paraburkholderia phymatum (strain DSM 17167 / CIP 108236 / LMG 21445 / STM815) (Burkholderia phymatum)).